The sequence spans 1145 residues: DNA polymerase II large subunit (1145 aa).

Positions 284–303 (KSSSESDEDEETDGKPKIKP) are disordered.

Belongs to the archaeal DNA polymerase II family. Heterodimer of a large subunit and a small subunit.

It catalyses the reaction DNA(n) + a 2'-deoxyribonucleoside 5'-triphosphate = DNA(n+1) + diphosphate. The enzyme catalyses Exonucleolytic cleavage in the 3'- to 5'-direction to yield nucleoside 5'-phosphates.. In terms of biological role, possesses two activities: a DNA synthesis (polymerase) and an exonucleolytic activity that degrades single-stranded DNA in the 3'- to 5'-direction. Has a template-primer preference which is characteristic of a replicative DNA polymerase. The chain is DNA polymerase II large subunit from Methanococcoides burtonii (strain DSM 6242 / NBRC 107633 / OCM 468 / ACE-M).